A 182-amino-acid chain; its full sequence is Ribosomal RNA small subunit methyltransferase G (182 aa).

S-adenosyl-L-methionine-binding positions include glycine 58, phenylalanine 63, 109–110 (IE), and arginine 123.

This sequence belongs to the methyltransferase superfamily. RNA methyltransferase RsmG family.

Its subcellular location is the cytoplasm. The enzyme catalyses guanosine(527) in 16S rRNA + S-adenosyl-L-methionine = N(7)-methylguanosine(527) in 16S rRNA + S-adenosyl-L-homocysteine. Functionally, specifically methylates the N7 position of guanine in position 527 of 16S rRNA. This is Ribosomal RNA small subunit methyltransferase G from Campylobacter fetus subsp. fetus (strain 82-40).